A 221-amino-acid polypeptide reads, in one-letter code: Cytidylate kinase (221 aa).

Residue G7–S15 coordinates ATP.

The protein belongs to the cytidylate kinase family. Type 1 subfamily.

It localises to the cytoplasm. The enzyme catalyses CMP + ATP = CDP + ADP. It carries out the reaction dCMP + ATP = dCDP + ADP. This is Cytidylate kinase from Borreliella burgdorferi (strain ZS7) (Borrelia burgdorferi).